The chain runs to 515 residues: Cytochrome P450 705A22 (515 aa).

Residues 9-29 form a helical membrane-spanning segment; the sequence is FQNCFIFILIFLLTFLCFFFF. Cysteine 454 lines the heme pocket.

It belongs to the cytochrome P450 family. Requires heme as cofactor.

It localises to the membrane. In terms of biological role, plays a role in the gravitropic response of the inflorescence stems and roots. May affect the synthesis of flavonols that have a role in regulating auxin transport. The sequence is that of Cytochrome P450 705A22 from Arabidopsis thaliana (Mouse-ear cress).